The chain runs to 376 residues: Putative glutamate--cysteine ligase 2 (376 aa).

The protein belongs to the glutamate--cysteine ligase type 2 family. YbdK subfamily.

The enzyme catalyses L-cysteine + L-glutamate + ATP = gamma-L-glutamyl-L-cysteine + ADP + phosphate + H(+). ATP-dependent carboxylate-amine ligase which exhibits weak glutamate--cysteine ligase activity. This Corynebacterium glutamicum (strain R) protein is Putative glutamate--cysteine ligase 2.